The sequence spans 815 residues: Calpain-3 (815 aa).

The segment at 7–36 is disordered; that stretch reads ASVAPRTAAEPRSPGPVPHPAQSKATEAGG. A Calpain catalytic domain is found at 74–417; that stretch reads LYVDPEFPPD…FTKLEICNLT (344 aa). Residues cysteine 129, histidine 334, and asparagine 358 contribute to the active site. Residues 418–586 are domain III; that stretch reads ADALQSDKLQ…KRNLSEEVEN (169 aa). The segment at 587-649 is linker; sequence TISVDRPVPI…QESEEQQQFR (63 aa). Residues 605 to 646 form a disordered region; that stretch reads SNKELGVDQESEEGKGKTSPDKQEQSPQPQPGSSDQESEEQQ. Positions 616–628 are enriched in basic and acidic residues; it reads EEGKGKTSPDKQE. Low complexity predominate over residues 629–639; the sequence is QSPQPQPGSSD. EF-hand domains are found at residues 643–677, 686–719, 716–751, and 781–815; these read EEQQQFRNIFKQIAGDDMEICADELKKVLNTVVNK, FTLESCRSMIALMDTDGSGKLNLQEFHHLWNKIK, NKIKAWQKIFKHYDTDQSGTINSYEMRNAVNDAGFH, and VRLEGMFRAFHAFDKDGDGIIKLNVLEWLQLTMYA. The domain IV stretch occupies residues 650–815; sequence NIFKQIAGDD…LEWLQLTMYA (166 aa). Ca(2+)-binding residues include alanine 656, aspartate 659, glutamate 661, glutamate 666, aspartate 699, aspartate 701, serine 703, lysine 705, glutamate 710, aspartate 729, aspartate 731, serine 733, threonine 735, glutamate 740, aspartate 794, aspartate 796, aspartate 798, and isoleucine 800.

Belongs to the peptidase C2 family. In terms of assembly, homodimer; via EF-hand domain 4. Interacts with TTN/titin. Interacts with CMYA5; this interaction, which results in CMYA5 proteolysis, may protect CAPN3 from autolysis. Interacts with SIMC1. Interacts with UTP25; the interaction is required for CAPN3 translocation to the nucleolus.

The protein localises to the cytoplasm. Its subcellular location is the nucleus. The protein resides in the nucleolus. The enzyme catalyses Broad endopeptidase activity.. Activated by micromolar concentrations of calcium and inhibited by calpastatin. Functionally, calcium-regulated non-lysosomal thiol-protease. Proteolytically cleaves CTBP1. Mediates, with UTP25, the proteasome-independent degradation of p53/TP53. This is Calpain-3 (CAPN3) from Macaca fascicularis (Crab-eating macaque).